We begin with the raw amino-acid sequence, 340 residues long: N-acetyl-gamma-glutamyl-phosphate reductase (340 aa).

Residue Cys146 is part of the active site.

Belongs to the NAGSA dehydrogenase family. Type 1 subfamily.

The protein resides in the cytoplasm. It catalyses the reaction N-acetyl-L-glutamate 5-semialdehyde + phosphate + NADP(+) = N-acetyl-L-glutamyl 5-phosphate + NADPH + H(+). It functions in the pathway amino-acid biosynthesis; L-arginine biosynthesis; N(2)-acetyl-L-ornithine from L-glutamate: step 3/4. Its function is as follows. Catalyzes the NADPH-dependent reduction of N-acetyl-5-glutamyl phosphate to yield N-acetyl-L-glutamate 5-semialdehyde. In Streptococcus gordonii (strain Challis / ATCC 35105 / BCRC 15272 / CH1 / DL1 / V288), this protein is N-acetyl-gamma-glutamyl-phosphate reductase.